The following is a 70-amino-acid chain: Conotoxin Vc6.10 (70 aa).

Positions 1–19 (MEKLTILLLVAAVLTSTQA) are cleaved as a signal peptide. The propeptide occupies 20–40 (LIQGGADERQKAKINFLSRSD). Disulfide bonds link Cys43–Cys57, Cys50–Cys62, and Cys56–Cys69.

This sequence belongs to the conotoxin O2 superfamily. In terms of tissue distribution, expressed by the venom duct.

It localises to the secreted. Inhibits voltage-gated ion channels. This chain is Conotoxin Vc6.10, found in Conus victoriae (Queen Victoria cone).